The chain runs to 313 residues: T-box protein 37 (313 aa).

Residues 19-195 (IWEKFYPKTE…HNKFASGFRS (177 aa)) constitute a DNA-binding region (T-box). The disordered stretch occupies residues 193-228 (FRSNGKRRLSSESENSENSPPKRSASAISSLTPPAI).

Its subcellular location is the nucleus. Its function is as follows. Transcription factor. Required for mesodermal induction, acting redundantly with transcription factor tbx-38. Together with tbx-38, acts by inducing cell fates in the AB lineage, thereby playing a role in development of the anterior pharynx. In Caenorhabditis elegans, this protein is T-box protein 37 (tbx-37).